A 525-amino-acid polypeptide reads, in one-letter code: CTP synthase (525 aa).

The tract at residues 1–269 (MKYIIVTGGV…ADAITTHLHL (269 aa)) is amidoligase domain. Serine 12 provides a ligand contact to CTP. Serine 12 is a UTP binding site. ATP contacts are provided by residues 13–18 (GLGKGI) and aspartate 70. Mg(2+)-binding residues include aspartate 70 and glutamate 144. CTP is bound by residues 151–153 (DIE), 190–195 (KTKPTQ), and lysine 226. UTP contacts are provided by residues 190–195 (KTKPTQ) and lysine 226. One can recognise a Glutamine amidotransferase type-1 domain in the interval 292 to 524 (VAIVSKYGIE…VSACRKNKKT (233 aa)). Glycine 348 is a binding site for L-glutamine. Cysteine 375 functions as the Nucleophile; for glutamine hydrolysis in the catalytic mechanism. Residues 376-379 (LGFQ), glutamate 399, and arginine 454 contribute to the L-glutamine site. Residues histidine 497 and glutamate 499 contribute to the active site.

Belongs to the CTP synthase family. As to quaternary structure, homotetramer.

The enzyme catalyses UTP + L-glutamine + ATP + H2O = CTP + L-glutamate + ADP + phosphate + 2 H(+). It carries out the reaction L-glutamine + H2O = L-glutamate + NH4(+). The catalysed reaction is UTP + NH4(+) + ATP = CTP + ADP + phosphate + 2 H(+). Its pathway is pyrimidine metabolism; CTP biosynthesis via de novo pathway; CTP from UDP: step 2/2. Its activity is regulated as follows. Allosterically activated by GTP, when glutamine is the substrate; GTP has no effect on the reaction when ammonia is the substrate. The allosteric effector GTP functions by stabilizing the protein conformation that binds the tetrahedral intermediate(s) formed during glutamine hydrolysis. Inhibited by the product CTP, via allosteric rather than competitive inhibition. Its function is as follows. Catalyzes the ATP-dependent amination of UTP to CTP with either L-glutamine or ammonia as the source of nitrogen. Regulates intracellular CTP levels through interactions with the four ribonucleotide triphosphates. This Methanosphaerula palustris (strain ATCC BAA-1556 / DSM 19958 / E1-9c) protein is CTP synthase.